A 148-amino-acid chain; its full sequence is MAEAGQRLVLAFDFGTRRIGVAVGNEMLGSATALAPLPARDGIPDWQQIAALLEEWQPDLLVVGLPLNMDGTESDMSRRARKFGNRLHGRFGKPVEVFDERGSTRAAKRIARDAGHRGNYRDDGVDGIAAQLILESFFADDTFLQRMP.

Belongs to the YqgF nuclease family.

The protein localises to the cytoplasm. Its function is as follows. Could be a nuclease involved in processing of the 5'-end of pre-16S rRNA. In Chromohalobacter salexigens (strain ATCC BAA-138 / DSM 3043 / CIP 106854 / NCIMB 13768 / 1H11), this protein is Putative pre-16S rRNA nuclease.